The following is a 215-amino-acid chain: Ras-related protein Rab-5A (215 aa).

GTP is bound by residues Ser29, Ala30, Gly32, Lys33, Ser34, Ser35, His46, Glu47, Thr52, and Gly78. Ser34 serves as a coordination point for Mg(2+). 2 consecutive short sequence motifs (switch) follow at residues 44–56 (QFHE…IGAA) and 77–93 (AGQE…YRGA). Thr52 lines the Mg(2+) pocket. Residue Ser84 is modified to Phosphoserine. GTP-binding residues include Asn133, Lys134, Asp136, Ala164, and Lys165. Residues 181 to 215 (LPKNEPQNPGANSARGRGVDLTEPTQPTRSQCCSN) form a disordered region. A compositionally biased stretch (polar residues) spans 203-215 (EPTQPTRSQCCSN). S-geranylgeranyl cysteine attachment occurs at residues Cys212 and Cys213.

It belongs to the small GTPase superfamily. Rab family. Interacts with GDI1; this promotes dissociation from membranes; phosphorylation at Ser-84 disrupts this interaction. Interacts with GDI2; phosphorylation at Ser-84 disrupts the interaction. Binds EEA1. Interacts with ALS2CL, SUN2, ZFYVE20 and RUFY1. Interacts with RIN1 and GAPVD1, which regulate its pathway, probably by acting as a GEF. Interacts with SGSM1 and SGSM3. Interacts with PIK3CB. Interacts with RABEP1 and RINL. Interacts with OCRL and INPP5F. May be a component of a complex composed of RAB5A, DYN2 and PIK3C3. Does not interact with the BLOC-3 complex (heterodimer of HPS1 and HPS4). Interacts with CLN5. Interacts with APPL2. Interacts with F8A1/F8A2/F8A3. Found in a complex with F8A1/F8A2/F8A3, HTT and RAB5A; mediates the recruitment of HTT by RAB5A onto early endosomes. Interacts with ATP9A. Interacts with PPP1R21; mediates the recruitment of FERRY complex by RAB5A onto early endosomes. Mg(2+) is required as a cofactor. Post-translationally, phosphorylation of Ser-84 in the switch II region by LRRK2 prevents the association of RAB regulatory proteins, including RAB GDP dissociation inhibitors GDI1 and GDI2.

It is found in the cell membrane. It localises to the early endosome membrane. The protein resides in the melanosome. Its subcellular location is the cytoplasmic vesicle. The protein localises to the cell projection. It is found in the ruffle. It localises to the cytoplasm. The protein resides in the cytosol. Its subcellular location is the membrane. The protein localises to the phagosome membrane. It is found in the endosome membrane. The enzyme catalyses GTP + H2O = GDP + phosphate + H(+). With respect to regulation, regulated by guanine nucleotide exchange factors (GEFs) including RINL, which promote the exchange of bound GDP for free GTP. Regulated by GTPase activating proteins (GAPs) which increase the GTP hydrolysis activity. Inhibited by GDP dissociation inhibitors (GDIs). Functionally, the small GTPases Rab are key regulators of intracellular membrane trafficking, from the formation of transport vesicles to their fusion with membranes. Rabs cycle between an inactive GDP-bound form and an active GTP-bound form that is able to recruit to membranes different sets of downstream effectors directly responsible for vesicle formation, movement, tethering and fusion. RAB5A is required for the fusion of plasma membranes and early endosomes. Contributes to the regulation of filopodia extension. Required for the exosomal release of SDCBP, CD63, PDCD6IP and syndecan. Regulates maturation of apoptotic cell-containing phagosomes, probably downstream of DYN2 and PIK3C3. This is Ras-related protein Rab-5A (RAB5A) from Canis lupus familiaris (Dog).